Here is an 84-residue protein sequence, read N- to C-terminus: Acyl carrier protein homolog (84 aa).

One can recognise a Carrier domain in the interval 4-79; it reads RDILLKIKEI…ELIAEVKHLI (76 aa). The residue at position 39 (serine 39) is an O-(pantetheine 4'-phosphoryl)serine.

4'-phosphopantetheine is transferred from CoA to a specific serine of the apo-ACP-like protein.

It participates in lipid metabolism; fatty acid biosynthesis. Functionally, carrier of the growing fatty acid chain in fatty acid biosynthesis. The polypeptide is Acyl carrier protein homolog (Mycoplasma pneumoniae (strain ATCC 29342 / M129 / Subtype 1) (Mycoplasmoides pneumoniae)).